Reading from the N-terminus, the 506-residue chain is tRNA (guanine(6)-N(2))-methyltransferase THUMP3 (506 aa).

The segment at 144–172 is disordered; it reads KTKRRKLNPNSSKQKIDNGRGDTTVEKDV. Over residues 157–172 the composition is skewed to basic and acidic residues; that stretch reads QKIDNGRGDTTVEKDV. Positions 170 to 286 constitute a THUMP domain; it reads KDVKKELTNS…DNEVVVGIAL (117 aa).

Belongs to the methyltransferase superfamily. Part of the heterodimeric THUMPD3-TRM112 methyltransferase complex; this complex forms an active tRNA methyltransferase, where TRMT112 acts as an activator of the catalytic subunit THUMPD3.

The protein resides in the cytoplasm. The catalysed reaction is guanosine(6) in tRNA + S-adenosyl-L-methionine = N(2)-methylguanosine(6) in tRNA + S-adenosyl-L-homocysteine + H(+). The enzyme catalyses guanosine(7) in tRNA + S-adenosyl-L-methionine = N(2)-methylguanosine(7) in tRNA + S-adenosyl-L-homocysteine + H(+). Its function is as follows. Catalytic subunit of the THUMPD3-TRM112 methyltransferase complex, that specifically mediates the S-adenosyl-L-methionine-dependent N(2)-methylation of guanosine nucleotide at position 6 (m2G6) in tRNAs. This is one of the major tRNA (guanine-N(2))-methyltransferases. Also catalyzes the S-adenosyl-L-methionine-dependent N(2)-methylation of guanosine nucleotide at position 7 of tRNA(Trp). The protein is tRNA (guanine(6)-N(2))-methyltransferase THUMP3 of Bos taurus (Bovine).